The sequence spans 179 residues: Large ribosomal subunit protein uL5 (179 aa).

Belongs to the universal ribosomal protein uL5 family. In terms of assembly, part of the 50S ribosomal subunit; part of the 5S rRNA/L5/L18/L25 subcomplex. Contacts the 5S rRNA and the P site tRNA. Forms a bridge to the 30S subunit in the 70S ribosome.

In terms of biological role, this is one of the proteins that bind and probably mediate the attachment of the 5S RNA into the large ribosomal subunit, where it forms part of the central protuberance. In the 70S ribosome it contacts protein S13 of the 30S subunit (bridge B1b), connecting the 2 subunits; this bridge is implicated in subunit movement. Contacts the P site tRNA; the 5S rRNA and some of its associated proteins might help stabilize positioning of ribosome-bound tRNAs. This is Large ribosomal subunit protein uL5 from Chromobacterium violaceum (strain ATCC 12472 / DSM 30191 / JCM 1249 / CCUG 213 / NBRC 12614 / NCIMB 9131 / NCTC 9757 / MK).